The primary structure comprises 354 residues: Ferrochelatase (354 aa).

Positions 204 and 306 each coordinate Fe cation.

It belongs to the ferrochelatase family.

Its subcellular location is the cytoplasm. It carries out the reaction heme b + 2 H(+) = protoporphyrin IX + Fe(2+). It functions in the pathway porphyrin-containing compound metabolism; protoheme biosynthesis; protoheme from protoporphyrin-IX: step 1/1. Its function is as follows. Catalyzes the ferrous insertion into protoporphyrin IX. The protein is Ferrochelatase of Coxiella burnetii (strain CbuG_Q212) (Coxiella burnetii (strain Q212)).